The primary structure comprises 129 residues: Glycoprotein hormone alpha-2 (129 aa).

The first 23 residues, 1 to 23 (MPMASPQTLVLYLLVLAVTEAWG), serve as a signal peptide directing secretion. 4 disulfides stabilise this stretch: cysteine 31–cysteine 89, cysteine 48–cysteine 103, cysteine 57–cysteine 119, and cysteine 61–cysteine 121. Residues asparagine 37 and asparagine 81 are each glycosylated (N-linked (GlcNAc...) asparagine).

The protein belongs to the glycoprotein hormones subunit alpha family. Heterodimer with GPHB5; this heterodimer interacts with thyroid-stimulating hormone receptor (TSHR), and hence stimulates cAMP production. Glycosylated. In terms of tissue distribution, found in a variety of tissues.

The protein resides in the secreted. Functions as a heterodimeric glycoprotein hormone with GPHB5 able to bind and activate the thyroid-stimulating hormone receptor (TSHR), leading to increased cAMP production. Plays a central role in controlling thyroid cell metabolism. The polypeptide is Glycoprotein hormone alpha-2 (GPHA2) (Homo sapiens (Human)).